We begin with the raw amino-acid sequence, 348 residues long: Fructose-1,6-bisphosphatase class 1 2 (348 aa).

The Mg(2+) site is built by E93, D117, L119, and D120. Residues 120 to 123, N213, Y244, and K274 contribute to the substrate site; that span reads DGSS. A Mg(2+)-binding site is contributed by E280.

The protein belongs to the FBPase class 1 family. As to quaternary structure, homotetramer. It depends on Mg(2+) as a cofactor.

The protein resides in the cytoplasm. It catalyses the reaction beta-D-fructose 1,6-bisphosphate + H2O = beta-D-fructose 6-phosphate + phosphate. Its pathway is carbohydrate biosynthesis; gluconeogenesis. The polypeptide is Fructose-1,6-bisphosphatase class 1 2 (Christiangramia forsetii (strain DSM 17595 / CGMCC 1.15422 / KT0803) (Gramella forsetii)).